Consider the following 382-residue polypeptide: Cytochrome b (382 aa).

4 helical membrane passes run 28–48, 72–94, 107–127, and 169–189; these read YGFL…FLAS, WCFR…LHIL, SWIS…IGYV, and FFVL…IHIF. Heme b is bound by residues histidine 78 and histidine 92. Residues histidine 173 and histidine 187 each contribute to the heme b site. Residue histidine 192 participates in a ubiquinone binding. Helical transmembrane passes span 214 to 234, 274 to 294, 317 to 337, and 340 to 360; these read LLSL…LQSI, IPSK…LFLL, VPMI…CQLP, and IFIL…LFAL.

This sequence belongs to the cytochrome b family. As to quaternary structure, the main subunits of complex b-c1 are: cytochrome b, cytochrome c1 and the Rieske protein. Heme b serves as cofactor.

It localises to the mitochondrion inner membrane. Its function is as follows. Component of the ubiquinol-cytochrome c reductase complex (complex III or cytochrome b-c1 complex) that is part of the mitochondrial respiratory chain. The b-c1 complex mediates electron transfer from ubiquinol to cytochrome c. Contributes to the generation of a proton gradient across the mitochondrial membrane that is then used for ATP synthesis. In Plasmodium vivax (strain Salvador I), this protein is Cytochrome b (MT-CYB).